The sequence spans 71 residues: Small ribosomal subunit protein bS21 (71 aa).

The disordered stretch occupies residues 47–71; it reads RENATRAKRHAKRVARENARNTRLY. Positions 60–71 are enriched in basic and acidic residues; that stretch reads VARENARNTRLY.

The protein belongs to the bacterial ribosomal protein bS21 family.

The sequence is that of Small ribosomal subunit protein bS21 from Histophilus somni (strain 129Pt) (Haemophilus somnus).